The chain runs to 145 residues: D-aminoacyl-tRNA deacylase (145 aa).

Residues 137–138 carry the Gly-cisPro motif, important for rejection of L-amino acids motif; that stretch reads GP.

It belongs to the DTD family. In terms of assembly, homodimer.

It is found in the cytoplasm. The catalysed reaction is glycyl-tRNA(Ala) + H2O = tRNA(Ala) + glycine + H(+). The enzyme catalyses a D-aminoacyl-tRNA + H2O = a tRNA + a D-alpha-amino acid + H(+). Its function is as follows. An aminoacyl-tRNA editing enzyme that deacylates mischarged D-aminoacyl-tRNAs. Also deacylates mischarged glycyl-tRNA(Ala), protecting cells against glycine mischarging by AlaRS. Acts via tRNA-based rather than protein-based catalysis; rejects L-amino acids rather than detecting D-amino acids in the active site. By recycling D-aminoacyl-tRNA to D-amino acids and free tRNA molecules, this enzyme counteracts the toxicity associated with the formation of D-aminoacyl-tRNA entities in vivo and helps enforce protein L-homochirality. The chain is D-aminoacyl-tRNA deacylase from Escherichia coli O7:K1 (strain IAI39 / ExPEC).